A 407-amino-acid polypeptide reads, in one-letter code: Argininosuccinate synthase (407 aa).

Residues 10 to 18 and A37 each bind ATP; that span reads AYSGGLDTS. L-citrulline contacts are provided by Y88 and S93. G118 contacts ATP. L-aspartate-binding residues include T120, N124, and D125. An L-citrulline-binding site is contributed by N124. The L-citrulline site is built by R128, S180, S189, E265, and Y277.

It belongs to the argininosuccinate synthase family. Type 1 subfamily. As to quaternary structure, homotetramer.

The protein resides in the cytoplasm. It catalyses the reaction L-citrulline + L-aspartate + ATP = 2-(N(omega)-L-arginino)succinate + AMP + diphosphate + H(+). The protein operates within amino-acid biosynthesis; L-arginine biosynthesis; L-arginine from L-ornithine and carbamoyl phosphate: step 2/3. In Alcanivorax borkumensis (strain ATCC 700651 / DSM 11573 / NCIMB 13689 / SK2), this protein is Argininosuccinate synthase.